We begin with the raw amino-acid sequence, 302 residues long: Rhomboid-related protein 2 (302 aa).

Residues 1–38 (MAVAHEMEMESVNLNMEREGKEEPEEEKMKGNGEGKDF) form a disordered region. Residues 16–38 (MEREGKEEPEEEKMKGNGEGKDF) show a composition bias toward basic and acidic residues. The next 7 membrane-spanning stretches (helical) occupy residues 71–91 (PLFI…YAVW), 127–147 (LVHA…VLGI), 158–178 (VGLV…IFDP), 182–202 (LVGA…NVIV), 211–231 (FGIV…GFAL), 244–264 (VSFA…YTVF), and 277–297 (FWIA…FNIF). The active-site Nucleophile is S186. H249 is a catalytic residue.

This sequence belongs to the peptidase S54 family. Proteolytic processing of the proenzyme produces an N- and a C-terminal fragment. The processing is required for activation of the protease.

The protein localises to the cell membrane. It carries out the reaction Cleaves type-1 transmembrane domains using a catalytic dyad composed of serine and histidine that are contributed by different transmembrane domains.. Functionally, involved in regulated intramembrane proteolysis and the subsequent release of functional polypeptides from their membrane anchors. Known substrate: EFNB3. This Mus musculus (Mouse) protein is Rhomboid-related protein 2 (Rhbdl2).